An 864-amino-acid polypeptide reads, in one-letter code: DNA mismatch repair protein MutS (864 aa).

621-628 (GPNMGGKS) contacts ATP. The interval 804 to 833 (ETGKPESPAPVASRSSKPSMQADMFAEPQP) is disordered.

Belongs to the DNA mismatch repair MutS family.

In terms of biological role, this protein is involved in the repair of mismatches in DNA. It is possible that it carries out the mismatch recognition step. This protein has a weak ATPase activity. The polypeptide is DNA mismatch repair protein MutS (Teredinibacter turnerae (strain ATCC 39867 / T7901)).